The sequence spans 5289 residues: Mucin-2 (5289 aa).

The N-terminal stretch at 1 to 20 (MGLPLARLAAVCLALSLAGG) is a signal peptide. A Phosphoserine modification is found at Ser-21. A Cu(2+)-binding site is contributed by His-34. Residues 35–207 (NVCSTWGNFH…KINQPDVVCE (173 aa)) form the VWFD 1 domain. Intrachain disulfides connect Cys-37–Cys-169, Cys-59–Cys-206, Cys-67–Cys-166, Cys-218–Cys-255, Cys-225–Cys-250, Cys-237–Cys-275, Cys-257–Cys-263, Cys-265–Cys-291, Cys-295–Cys-329, Cys-308–Cys-321, Cys-312–Cys-351, Cys-331–Cys-345, Cys-353–Cys-375, Cys-370–Cys-387, Cys-373–Cys-382, Cys-391–Cys-528, Cys-413–Cys-563, Cys-435–Cys-443, Cys-574–Cys-619, Cys-588–Cys-614, Cys-601–Cys-639, Cys-621–Cys-627, Cys-629–Cys-654, Cys-661–Cys-698, Cys-674–Cys-688, Cys-678–Cys-718, Cys-700–Cys-712, Cys-720–Cys-742, and Cys-740–Cys-749. Asp-49 lines the Ca(2+) pocket. Cu(+) is bound by residues Met-146 and Met-154. Cu(2+) is bound at residue Glu-156. Residue Asn-163 is glycosylated (N-linked (GlcNAc...) asparagine). Residues Asp-171, Asn-173, Leu-175, and Glu-180 each contribute to the Ca(2+) site. Residue His-277 participates in Cu(2+) binding. The 57-residue stretch at 295–351 (CPGNLVYLESGSPCMDTCSHLEVSSLCEEHRMDGCFCPEGTVYDDIGDSGCVPVSQC) folds into the TIL domain. His-324 is a binding site for Cu(2+). Met-326 contributes to the Cu(+) binding site. Residues 389-564 (GTCALEGGSH…NTWKAQSSCH (176 aa)) enclose the VWFD 2 domain. Ca(2+) is bound at residue Asp-403. N-linked (GlcNAc...) asparagine glycosylation is present at Asn-423. Residues Asn-530, Asn-532, Leu-534, Asp-537, and Asp-538 each contribute to the Ca(2+) site. Asn-670 carries an N-linked (GlcNAc...) asparagine glycan. Asn-770 carries an N-linked (GlcNAc...) asparagine glycan. Cystine bridges form between Cys-784–Cys-820, Cys-802–Cys-814, Cys-822–Cys-844, Cys-839–Cys-856, Cys-842–Cys-851, Cys-860–Cys-992, Cys-882–Cys-1027, Cys-891–Cys-989, Cys-909–Cys-916, Cys-1037–Cys-1080, Cys-1051–Cys-1075, Cys-1062–Cys-1102, Cys-1082–Cys-1090, Cys-1092–Cys-1117, Cys-1108–Cys-1137, Cys-1121–Cys-1163, Cys-1145–Cys-1187, Cys-1167–Cys-1181, Cys-1189–Cys-1213, Cys-1208–Cys-1238, and Cys-1211–Cys-1221. Positions 858 to 1028 (GTCSIYGSGH…NSWKEAPTCP (171 aa)) constitute a VWFD 3 domain. Residue Asp-872 coordinates Ca(2+). A glycan (N-linked (GlcNAc...) asparagine) is linked at Asn-894. Ca(2+) is bound by residues Asn-994, Asp-996, Arg-998, Asn-1001, and Asp-1002. Asn-1139 and Asn-1154 each carry an N-linked (GlcNAc...) asparagine glycan. Residues Asn-1215, Asn-1230, and Asn-1246 are each glycosylated (N-linked (GlcNAc...) asparagine). Thr-1266, Thr-1267, Thr-1269, Thr-1270, Thr-1272, Thr-1275, Thr-1276, Thr-1281, Thr-1282, and Thr-1287 each carry an O-linked (GalNAc) threonine glycan. 2 O-linked (GalNAc) serine glycosylation sites follow: Ser-1291 and Ser-1292. O-linked (GalNAc) threonine glycosylation occurs at Thr-1293. Ser-1296 carries O-linked (GalNAc) serine glycosylation. O-linked (GalNAc) threonine glycosylation is present at Thr-1297. Ca(2+) contacts are provided by Asn-1310, Asp-1312, His-1313, Ser-1316, Asp-1319, Gly-1321, Asp-1322, Glu-1324, Asp-1381, and Tyr-1382. 5 stretches are compositionally biased toward pro residues: residues 1399–1411 (PSPP…PPPT), 1419–1510 (TTTP…PITP), 1520–1549 (TTTP…PITP), 1559–1628 (TTTP…PITP), and 1638–1679 (TTTP…PPTT). Residues 1399–1773 (PSPPTTTPSP…SITPPTFSPF (375 aa)) are disordered. 6 repeat units span residues 1401–1416 (PPTT…TTTL), 1417–1432 (PPTT…TTTP), 1433–1448 (PPTT…TTTP), 1449–1464 (PPTT…TTTP), 1465–1471 (PPTTTPS), and 1472–1478 (PPTTTPS). The segment at 1401-1747 (PPTTTPSPPP…SPPTTTMTTL (347 aa)) is approximate repeats. The 7A repeat unit spans residues 1479–1494 (PPTTTPSPPTTTTTTP). A 7B repeat occupies 1495–1517 (PPTTTPSPPTTTPITPPASTTTL). Residues 1518-1533 (PPTTTPSPPTTTTTTP) form an 8A repeat. The stretch at 1534–1556 (PPTTTPSPPTTTPITPPTSTTTL) is one 8B repeat. Residues 1557–1572 (PPTTTPSPPPTTTTTP) form a 9A repeat. Residues 1573–1596 (PPTTTPSPPTTTTPSPPTITTTTP) form a 9B repeat. The stretch at 1597–1612 (PPTTTPSPPTTTTTTP) is one 10A repeat. The 10B repeat unit spans residues 1613 to 1635 (PPTTTPSPPTTTPITPPTSTTTL). One copy of the 11A repeat lies at 1636 to 1651 (PPTTTPSPPPTTTTTP). The stretch at 1652–1675 (PPTTTPSPPTTTTPSPPITTTTTP) is one 11B repeat. Tandem repeats lie at residues 1676–1683 (PPTTTPSS), 1684–1699 (PITT…MTTP), 1700–1715 (SPTT…TTTP), 1716–1731 (SSTT…MTTP), and 1732–1747 (SPTT…MTTL). 2 stretches are compositionally biased toward low complexity: residues 1680 to 1720 (TPSS…STTT) and 1741 to 1759 (TTTM…LTTT). Residues 1760-1770 (PLPPSITPPTF) are compositionally biased toward pro residues. N-linked (GlcNAc...) asparagine glycosylation is found at Asn-1787 and Asn-1820. Low complexity-rich tracts occupy residues 1885–2158 (MTTT…TMVT), 2165–4238 (GTQT…QTPT), 4269–4315 (TTVT…STAP), and 4329–4430 (STPQ…PSII). Disordered regions lie at residues 1885 to 4238 (MTTT…QTPT) and 4269 to 4430 (TTVT…PSII). Asn-4449, Asn-4461, Asn-4472, and Asn-4483 each carry an N-linked (GlcNAc...) asparagine glycan. Residues 4492–4524 (PTPTPSKSTPTPSKPSSTPSKPTPGTKPPECPD) form a disordered region. The span at 4496–4511 (PSKSTPTPSKPSSTPS) shows a compositional bias: low complexity. A compositionally biased stretch (pro residues) spans 4512 to 4522 (KPTPGTKPPEC). 3 N-linked (GlcNAc...) asparagine glycosylation sites follow: Asn-4532, Asn-4548, and Asn-4612. Residues 4589-4772 (CYCTGWGDPH…VNDPSKPHCP (184 aa)) enclose the VWFD 4 domain. Cystine bridges form between Cys-4591-Cys-4732, Cys-4613-Cys-4771, and Cys-4637-Cys-4645. N-linked (GlcNAc...) asparagine glycosylation is found at Asn-4726 and Asn-4737. The tract at residues 4770-4795 (HCPHSSSTTKRPAVTVPGGGKTTPHK) is disordered. 9 N-linked (GlcNAc...) asparagine glycosylation sites follow: Asn-4862, Asn-4897, Asn-4991, Asn-4998, Asn-5065, Asn-5080, Asn-5129, Asn-5148, and Asn-5179. Residues 4927–4996 (CVGPDNVPRE…DTCCNITVCK (70 aa)) enclose the VWFC 1 domain. The VWFC 2 domain occupies 5034–5101 (GVCVHGNAEY…APGECCKKCE (68 aa)). 4 disulfide bridges follow: Cys-5185–Cys-5232, Cys-5199–Cys-5246, Cys-5208–Cys-5262, and Cys-5212–Cys-5264. The 86-residue stretch at 5185-5270 (CSTVPVTTEV…SCQCQDTVCG (86 aa)) folds into the CTCK domain.

As to quaternary structure, homomultimer; disulfide-linked. The N- and C-terminus mediate their assembly into higher order structures to form filaments. The CTCK domains of two polypeptides associate in the endoplasmic reticulum to generate intermolecularly disulfide-bonded dimers. These dimers progress to the Golgi apparatus, which is a more acidic environment than the endoplasmic reticulum. Under acidic conditions, the N-termini form non-covalent intermolecular interactions that juxtapose assemblies of the third VWD domain (VWD3) from different CTCK-linked dimers. The VWD3 assemblies then become disulfide bonded to one another to produce long, disulfide-linked polymers that remain highly compact until secretion. Interacts with FCGBP. Interacts with AGR2; disulfide-linked. In terms of assembly, (Microbial infection) Interacts in vitro with L.monocytogenes internalin proteins InlB, InlC and InlJ; for InlC binding is slightly better at pH 5.5, (the pH of the intestine) than at pH 7.4. O-glycosylated. O-glycosylation is required for mucin assembly. Goblet cells synthesize two forms of mucin that differ in branched chain O-glycosylation and the site of production in the colon. Post-translationally, may undergo proteolytic cleavage in the outer mucus layer of the colon, contributing to the expanded volume and loose nature of this layer which allows for bacterial colonization in contrast to the inner mucus layer which is dense and devoid of bacteria. In terms of processing, at low pH of 6 and under, undergoes autocatalytic cleavage in vitro in the N-terminal region of the fourth VWD domain. It is likely that this also occurs in vivo and is triggered by the low pH of the late secretory pathway. As to expression, colon, small intestine, colonic tumors, bronchus, cervix and gall bladder.

Its subcellular location is the secreted. Functionally, coats the epithelia of the intestines and other mucus membrane-containing organs to provide a protective, lubricating barrier against particles and infectious agents at mucosal surfaces. Major constituent of the colon mucus, which is mainly formed by large polymeric networks of MUC2 secreted by goblet cells that cover the exposed surfaces of intestine. MUC2 networks form hydrogels that guard the underlying epithelium from pathogens and other hazardous matter entering from the outside world, while permitting nutrient absorption and gas exchange. Acts as a divalent copper chaperone that protects intestinal cells from copper toxicity and facilitates nutritional copper unptake into cells. Binds both Cu(2+) and its reduced form, Cu(1+), at two juxtaposed binding sites: Cu(2+), once reduced to Cu(1+) by vitamin C (ascorbate) or other dietary antioxidants, transits to the other binding site. MUC2-bound Cu(1+) is protected from oxidation in aerobic environments, and can be released for nutritional delivery to cells. Mucin gels store antimicrobial molecules that participate in innate immunity. Mucin glycoproteins also house and feed the microbiome, lubricate tissue surfaces, and may facilitate the removal of contaminants and waste products from the body. Goblet cells synthesize two forms of MUC2 mucin that differ in branched chain O-glycosylation and the site of production in the colon: a (1) 'thick' mucus that wraps the microbiota to form fecal pellets is produced in the proximal, ascending colon. 'Thick' mucus transits along the descending colon and is lubricated by a (2) 'thin' MUC2 mucus produced in the distal colon which adheres to the 'thick' mucus. The polypeptide is Mucin-2 (Homo sapiens (Human)).